We begin with the raw amino-acid sequence, 930 residues long: Kinesin-like protein KIN-7J (930 aa).

Residues 9–273 enclose the Kinesin motor domain; that stretch reads KILVSVRVRP…TLGTVIRKLR (265 aa). 95-102 provides a ligand contact to ATP; the sequence is GQTSSGKT. Disordered stretches follow at residues 449-569 and 655-686; these read LKNS…IGTD and MQTKASPGRPNTSSISFDSGSSTSIDTRSLKD. A compositionally biased stretch (low complexity) spans 459–468; sequence SVEAQESQES. Composition is skewed to basic and acidic residues over residues 473 to 482 and 533 to 558; these read EQMKNEERKM and AKLDEDATSRDKWESKQQQEADKDCN. Residues 666–681 show a composition bias toward low complexity; the sequence is TSSISFDSGSSTSIDT. A Glycyl lysine isopeptide (Lys-Gly) (interchain with G-Cter in ubiquitin) cross-link involves residue Lys-805.

Belongs to the TRAFAC class myosin-kinesin ATPase superfamily. Kinesin family. KIN-7 subfamily.

This chain is Kinesin-like protein KIN-7J, found in Arabidopsis thaliana (Mouse-ear cress).